The chain runs to 406 residues: Homocitrate synthase AksA (406 aa).

Residues 32 to 285 (IYIYDTTLRD…DLGLNLEVLP (254 aa)) enclose the Pyruvate carboxyltransferase domain.

Belongs to the alpha-IPM synthase/homocitrate synthase family.

The catalysed reaction is acetyl-CoA + 2-oxoglutarate + H2O = (2R)-homocitrate + CoA + H(+). The enzyme catalyses 2-oxoadipate + acetyl-CoA + H2O = (R)-dihomocitrate + CoA + H(+). It catalyses the reaction 2-oxoheptanedioate + acetyl-CoA + H2O = (R)-trihomocitrate + CoA + H(+). It functions in the pathway organic acid metabolism; 2-oxosuberate biosynthesis. Its function is as follows. Catalyzes the condensation of alpha-ketoglutarate and acetyl-CoA to form (R)-homocitrate. Can also catalyze the condensation of alpha-ketoadipate with acetyl-CoA to form (R)-homo(2)citrate, and the condensation of alpha-ketopimelate with acetyl-CoA to form (R)-homo(3)citrate. These reactions are part of the biosynthesis pathway of coenzyme B and biotin. This is Homocitrate synthase AksA (aksA) from Methanocaldococcus jannaschii (strain ATCC 43067 / DSM 2661 / JAL-1 / JCM 10045 / NBRC 100440) (Methanococcus jannaschii).